We begin with the raw amino-acid sequence, 239 residues long: Peptidyl-tRNA hydrolase (239 aa).

Position 14 (Tyr-14) interacts with tRNA. His-19 functions as the Proton acceptor in the catalytic mechanism. Phe-64, Asn-66, and Asn-112 together coordinate tRNA. The segment at Ala-188 to Arg-239 is disordered. Basic and acidic residues predominate over residues Lys-198–Arg-239.

The protein belongs to the PTH family. In terms of assembly, monomer.

It localises to the cytoplasm. The catalysed reaction is an N-acyl-L-alpha-aminoacyl-tRNA + H2O = an N-acyl-L-amino acid + a tRNA + H(+). In terms of biological role, hydrolyzes ribosome-free peptidyl-tRNAs (with 1 or more amino acids incorporated), which drop off the ribosome during protein synthesis, or as a result of ribosome stalling. Catalyzes the release of premature peptidyl moieties from peptidyl-tRNA molecules trapped in stalled 50S ribosomal subunits, and thus maintains levels of free tRNAs and 50S ribosomes. This Jannaschia sp. (strain CCS1) protein is Peptidyl-tRNA hydrolase.